A 189-amino-acid chain; its full sequence is Transcriptional repressor NrdR (189 aa).

A zinc finger lies at 3 to 34 (CPFCRGDDSRVVDSREVEDGQAIRRRRSCSGC). The ATP-cone domain maps to 46 to 136 (LSVVKRSGVT…VYRAFSSVED (91 aa)). Residues 152–189 (RLPEGPEAAQGGPESKAGNGQAAGSGDPEGVKAEKSSE) form a disordered region. Basic and acidic residues predominate over residues 180–189 (EGVKAEKSSE).

It belongs to the NrdR family. It depends on Zn(2+) as a cofactor.

Functionally, negatively regulates transcription of bacterial ribonucleotide reductase nrd genes and operons by binding to NrdR-boxes. In Saccharopolyspora erythraea (strain ATCC 11635 / DSM 40517 / JCM 4748 / NBRC 13426 / NCIMB 8594 / NRRL 2338), this protein is Transcriptional repressor NrdR.